The sequence spans 395 residues: Pyridinium-3,5-bisthiocarboxylic acid mononucleotide nickel insertion protein (395 aa).

This sequence belongs to the LarC family.

It catalyses the reaction Ni(II)-pyridinium-3,5-bisthiocarboxylate mononucleotide = pyridinium-3,5-bisthiocarboxylate mononucleotide + Ni(2+). In terms of biological role, involved in the biosynthesis of a nickel-pincer cofactor ((SCS)Ni(II) pincer complex). Binds Ni(2+), and functions in nickel delivery to pyridinium-3,5-bisthiocarboxylic acid mononucleotide (P2TMN), to form the mature cofactor. Is thus probably required for the activation of nickel-pincer cofactor-dependent enzymes. This chain is Pyridinium-3,5-bisthiocarboxylic acid mononucleotide nickel insertion protein, found in Staphylococcus epidermidis (strain ATCC 35984 / DSM 28319 / BCRC 17069 / CCUG 31568 / BM 3577 / RP62A).